The primary structure comprises 217 residues: Uracil-DNA glycosylase (217 aa).

Aspartate 62 acts as the Proton acceptor in catalysis.

Belongs to the uracil-DNA glycosylase (UDG) superfamily. UNG family.

The protein resides in the cytoplasm. It catalyses the reaction Hydrolyzes single-stranded DNA or mismatched double-stranded DNA and polynucleotides, releasing free uracil.. Functionally, excises uracil residues from the DNA which can arise as a result of misincorporation of dUMP residues by DNA polymerase or due to deamination of cytosine. The polypeptide is Uracil-DNA glycosylase (Streptococcus pyogenes serotype M28 (strain MGAS6180)).